Reading from the N-terminus, the 448-residue chain is B box and SPRY domain-containing protein (448 aa).

The span at 1–18 (MSSDVSGTESGSESGPES) shows a compositional bias: low complexity. A disordered region spans residues 1–58 (MSSDVSGTESGSESGPESVPEPVPEPGPEPESEPGPGPAPGPGPGPAPGPGPGLGREP). The segment covering 19-51 (VPEPVPEPGPEPESEPGPGPAPGPGPGPAPGPG) has biased composition (pro residues). The B box-type zinc-finger motif lies at 63-111 (QPCQLCPEHGKPLSWFCLSERRPVCATCAGFGGRCHRHRIRRAEEHAEE). Residues 257–448 (SPLLTQLWAT…VADQVISIVC (192 aa)) form the B30.2/SPRY domain.

As to quaternary structure, interacts with TRPV5 and TRPV6. Interacts with YWHAZ/14-3-3 protein zeta. As to expression, predominantly expressed in testis. Expressed in brain at low levels.

The protein localises to the cytoplasm. The protein resides in the membrane. In terms of biological role, may regulate epithelial calcium transport by inhibiting TRPV5 activity. This Rattus norvegicus (Rat) protein is B box and SPRY domain-containing protein (Bspry).